We begin with the raw amino-acid sequence, 1086 residues long: Calcium-transporting ATPase 9, plasma membrane-type (1086 aa).

Residues 1–15 (MSTSSSNGLLLTSMS) show a composition bias toward low complexity. A disordered region spans residues 1–50 (MSTSSSNGLLLTSMSGRHDDMEAGSAKTEEHSDHEELQHDPDDPFDIDNT). The Cytoplasmic segment spans residues 1–194 (MSTSSSNGLL…NTYPKKKGKN (194 aa)). Positions 16–42 (GRHDDMEAGSAKTEEHSDHEELQHDPD) are enriched in basic and acidic residues. Positions 57 to 68 (SLRRWRQAALVL) are interaction with calmodulin. A helical transmembrane segment spans residues 195–215 (FFMFLWEAWQDLTLIILIIAA). The Lumenal portion of the chain corresponds to 216-233 (VTSLALGIKTEGLKEGWL). A helical transmembrane segment spans residues 234–254 (DGGSIAFAVLLVIVVTAVSDY). Residues 255–382 (RQSLQFQNLN…GEETPLQVRL (128 aa)) lie on the Cytoplasmic side of the membrane. The chain crosses the membrane as a helical span at residues 383–402 (NGLATFIGIVGLSVALVVLV). Residues 403 to 439 (ALLVRYFTGTTQDTNGATQFIKGTTSISDIVDDCVKI) are Lumenal-facing. The chain crosses the membrane as a helical span at residues 440 to 457 (FTIAVTIVVVAVPEGLPL). Residues 458 to 857 (AVTLTLAYSM…RWGRSVYANI (400 aa)) lie on the Cytoplasmic side of the membrane. Catalysis depends on D495, which acts as the 4-aspartylphosphate intermediate. Residues D802 and D806 each coordinate Mg(2+). The chain crosses the membrane as a helical span at residues 858-876 (QKFIQFQLTVNVAALIINV). Residues 877-887 (VAAMSSGDVPL) are Lumenal-facing. The chain crosses the membrane as a helical span at residues 888 to 908 (KAVQLLWVNLIMDTLGALALA). Residues 909–928 (TEPPTDHLMHRTPVGRREPL) lie on the Cytoplasmic side of the membrane. The chain crosses the membrane as a helical span at residues 929-951 (ITNIMWRNLLVQSFYQVAVLLVL). The Lumenal segment spans residues 952-963 (NFAGLSILGLNH). A helical membrane pass occupies residues 964–988 (ENHAHAVEVKNTMIFNAFVMCQIFN). The Cytoplasmic segment spans residues 989 to 1006 (EFNARKPDEMNVFRGVNK). The chain crosses the membrane as a helical span at residues 1007 to 1028 (NPLFVAIVGVTFILQIIIVTFL). Residues 1029-1038 (GKFAHTVRLG) are Lumenal-facing. Residues 1039–1060 (WQLWLASIIIGLVSWPLAIVGK) form a helical membrane-spanning segment. At 1061–1086 (LIPVPKTPMSVYFKKPFRKYKASRNA) the chain is on the cytoplasmic side.

This sequence belongs to the cation transport ATPase (P-type) (TC 3.A.3) family. Type IIB subfamily.

The protein resides in the membrane. The catalysed reaction is Ca(2+)(in) + ATP + H2O = Ca(2+)(out) + ADP + phosphate + H(+). Its activity is regulated as follows. Activated by calmodulin. In terms of biological role, this magnesium-dependent enzyme catalyzes the hydrolysis of ATP coupled with the translocation of calcium from the cytosol out of the cell or into organelles. This Arabidopsis thaliana (Mouse-ear cress) protein is Calcium-transporting ATPase 9, plasma membrane-type (ACA9).